The sequence spans 491 residues: UDP-N-acetylmuramate--L-alanine ligase (491 aa).

Position 115–121 (115–121 (GTHGKTT)) interacts with ATP.

It belongs to the MurCDEF family.

The protein localises to the cytoplasm. It carries out the reaction UDP-N-acetyl-alpha-D-muramate + L-alanine + ATP = UDP-N-acetyl-alpha-D-muramoyl-L-alanine + ADP + phosphate + H(+). Its pathway is cell wall biogenesis; peptidoglycan biosynthesis. Cell wall formation. The chain is UDP-N-acetylmuramate--L-alanine ligase from Parvibaculum lavamentivorans (strain DS-1 / DSM 13023 / NCIMB 13966).